A 197-amino-acid chain; its full sequence is GTP cyclohydrolase-2 (197 aa).

49–53 is a binding site for GTP; the sequence is RVHSE. 3 residues coordinate Zn(2+): C54, C65, and C67. GTP contacts are provided by residues Q70, 92 to 94, and T114; that span reads EGR. D126 serves as the catalytic Proton acceptor. The Nucleophile role is filled by R128. GTP is bound by residues T149 and K154.

It belongs to the GTP cyclohydrolase II family. In terms of assembly, homodimer. It depends on Zn(2+) as a cofactor.

The enzyme catalyses GTP + 4 H2O = 2,5-diamino-6-hydroxy-4-(5-phosphoribosylamino)-pyrimidine + formate + 2 phosphate + 3 H(+). It functions in the pathway cofactor biosynthesis; riboflavin biosynthesis; 5-amino-6-(D-ribitylamino)uracil from GTP: step 1/4. In terms of biological role, catalyzes the conversion of GTP to 2,5-diamino-6-ribosylamino-4(3H)-pyrimidinone 5'-phosphate (DARP), formate and pyrophosphate. The chain is GTP cyclohydrolase-2 from Cronobacter sakazakii (strain ATCC BAA-894) (Enterobacter sakazakii).